Here is a 236-residue protein sequence, read N- to C-terminus: Small ribosomal subunit protein uS2c (236 aa).

This sequence belongs to the universal ribosomal protein uS2 family.

It is found in the plastid. Its subcellular location is the chloroplast. This chain is Small ribosomal subunit protein uS2c (rps2), found in Liriodendron tulipifera (Tuliptree).